Consider the following 298-residue polypeptide: Tyrosine recombinase XerC (298 aa).

A Core-binding (CB) domain is found at 2 to 88; the sequence is TDLHTDVERY…ALRSFFDWLV (87 aa). Residues 109–288 enclose the Tyr recombinase domain; sequence HLPKNIDVDD…DFQHLASVYD (180 aa). Active-site residues include Arg148, Lys172, His240, Arg243, and His266. The O-(3'-phospho-DNA)-tyrosine intermediate role is filled by Tyr275.

This sequence belongs to the 'phage' integrase family. XerC subfamily. Forms a cyclic heterotetrameric complex composed of two molecules of XerC and two molecules of XerD, in which XerC interacts with XerD via its C-terminal region, XerD interacts with XerC via its C-terminal region and so on.

The protein resides in the cytoplasm. Its activity is regulated as follows. FtsK may regulate the catalytic switch between XerC and XerD in the heterotetrameric complex during the two steps of the recombination process. Functionally, site-specific tyrosine recombinase, which acts by catalyzing the cutting and rejoining of the recombining DNA molecules. Binds cooperatively to specific DNA consensus sequences that are separated from XerD binding sites by a short central region, forming the heterotetrameric XerC-XerD complex that recombines DNA substrates. The complex is essential to convert dimers of the bacterial chromosome into monomers to permit their segregation at cell division. It also contributes to the segregational stability of plasmids. In the complex XerC specifically exchanges the top DNA strands. This chain is Tyrosine recombinase XerC, found in Escherichia coli O157:H7.